Reading from the N-terminus, the 365-residue chain is 3-dehydroquinate synthase (365 aa).

NAD(+) is bound by residues 69–74 (DGEAHK), 103–107 (GVIGD), 127–128 (TT), lysine 140, and lysine 149. Glutamate 182, histidine 245, and histidine 262 together coordinate Zn(2+).

Belongs to the sugar phosphate cyclases superfamily. Dehydroquinate synthase family. NAD(+) is required as a cofactor. Co(2+) serves as cofactor. The cofactor is Zn(2+).

The protein resides in the cytoplasm. It carries out the reaction 7-phospho-2-dehydro-3-deoxy-D-arabino-heptonate = 3-dehydroquinate + phosphate. Its pathway is metabolic intermediate biosynthesis; chorismate biosynthesis; chorismate from D-erythrose 4-phosphate and phosphoenolpyruvate: step 2/7. Functionally, catalyzes the conversion of 3-deoxy-D-arabino-heptulosonate 7-phosphate (DAHP) to dehydroquinate (DHQ). The chain is 3-dehydroquinate synthase from Pseudomonas putida (strain ATCC 47054 / DSM 6125 / CFBP 8728 / NCIMB 11950 / KT2440).